Here is a 161-residue protein sequence, read N- to C-terminus: Anaerobic nitrite reductase Glb1-1 (161 aa).

One can recognise a Globin domain in the interval Cys-8 to Lys-157. Residues Glu-41–Ser-45 carry the Homodimerization motif. Residues Ser-51, Lys-65, His-69, Lys-99, Thr-103, and His-104 each contribute to the heme b site. The Homodimerization motif lies at Asn-111 to Asp-123.

The protein belongs to the plant globin family. As to quaternary structure, homodimer. Requires heme b as cofactor. As to expression, mainly expressed in root nodules, and, to a lower extent, in leaves, roots, stems, flowers and fruits. Accumulates in mature root nodules.

The catalysed reaction is Fe(III)-heme b-[protein] + nitric oxide + H2O = Fe(II)-heme b-[protein] + nitrite + 2 H(+). Its function is as follows. Phytoglobin that reduces nitrite to nitric oxide (NO) under anoxic conditions (e.g. during flooding or in waterlogged soil) and upon root nodulation. Required for general plant development and during nodulation, especially for the onset of symbiosis. Monitors nitric oxide (NO) levels during early phase of the nitrogen-fixing symbiosis and buffers oxygen in functioning nodules. May not function as an oxygen storage or transport protein. Has an unusually high affinity for O(2) through a hexacoordinate heme iron because of a very low dissociation constant. The sequence is that of Anaerobic nitrite reductase Glb1-1 from Lotus japonicus (Lotus corniculatus var. japonicus).